Reading from the N-terminus, the 344-residue chain is Lysophosphatidic acid receptor 6 (344 aa).

Residues Met1–Leu19 are Extracellular-facing. Asn5 carries N-linked (GlcNAc...) asparagine glycosylation. A helical membrane pass occupies residues Tyr20 to Leu46. Residues Lys47–Tyr55 lie on the Cytoplasmic side of the membrane. A helical transmembrane segment spans residues Met56–Thr79. Residues Arg80 to Ser92 are Extracellular-facing. A disulfide bridge links Cys89 with Cys168. The chain crosses the membrane as a helical span at residues Val93–Val112. Residues Asp113–Ala133 lie on the Cytoplasmic side of the membrane. The chain crosses the membrane as a helical span at residues Lys134–Val154. Residues Gln155 to Leu181 are Extracellular-facing. The chain crosses the membrane as a helical span at residues Ser182–Lys209. The Cytoplasmic segment spans residues Thr210–Val227. The helical transmembrane segment at Leu228–Ser253 threads the bilayer. Residues Leu254–Met272 are Extracellular-facing. The chain crosses the membrane as a helical span at residues Tyr273–Tyr292. The S-palmitoyl cysteine moiety is linked to residue Cys284. The Cytoplasmic portion of the chain corresponds to Phe293–Ala344.

It belongs to the G-protein coupled receptor 1 family. In terms of tissue distribution, expressed ubiquitously, including in skin and hair follicle cells. Detected in both Henle's and Huxley's layers of the inner root sheath of the hair follicle and in suprabasal layers of the epidermis (at protein level). Expressed at low levels in peripheral blood leukocytes.

Its subcellular location is the cell membrane. Its function is as follows. Binds to oleoyl-L-alpha-lysophosphatidic acid (LPA). Intracellular cAMP is involved in the receptor activation. Important for the maintenance of hair growth and texture. This chain is Lysophosphatidic acid receptor 6 (LPAR6), found in Homo sapiens (Human).